A 396-amino-acid polypeptide reads, in one-letter code: Elongation factor Tu (396 aa).

Residues 10–206 (KPHCNIGTIG…AVDAYIPQPE (197 aa)) enclose the tr-type G domain. Residues 19–26 (GHVDHGKT) are G1. A GTP-binding site is contributed by 19–26 (GHVDHGKT). Residue Thr-26 participates in Mg(2+) binding. A G2 region spans residues 60 to 64 (GITIS). Residues 81-84 (DCPG) form a G3 region. Residues 81–85 (DCPGH) and 136–139 (NKCD) each bind GTP. The segment at 136–139 (NKCD) is G4. The tract at residues 174–176 (SAL) is G5.

The protein belongs to the TRAFAC class translation factor GTPase superfamily. Classic translation factor GTPase family. EF-Tu/EF-1A subfamily. In terms of assembly, monomer.

It is found in the cytoplasm. It carries out the reaction GTP + H2O = GDP + phosphate + H(+). GTP hydrolase that promotes the GTP-dependent binding of aminoacyl-tRNA to the A-site of ribosomes during protein biosynthesis. This is Elongation factor Tu from Rhodopseudomonas palustris (strain BisB18).